The sequence spans 35 residues: KCSPSGAICSGFGPPEQCCSGACVPHPILRIFVCQ.

Disulfide bonds link Cys-2–Cys-19, Cys-9–Cys-23, and Cys-18–Cys-34.

Its function is as follows. Trypsin inhibitor. This Spinacia oleracea (Spinach) protein is Trypsin inhibitor 1.